The following is a 474-amino-acid chain: Glutamyl-tRNA(Gln) amidotransferase subunit A (474 aa).

Residues Lys-76 and Ser-151 each act as charge relay system in the active site. Ser-175 (acyl-ester intermediate) is an active-site residue.

The protein belongs to the amidase family. GatA subfamily. In terms of assembly, heterotrimer of A, B and C subunits.

The enzyme catalyses L-glutamyl-tRNA(Gln) + L-glutamine + ATP + H2O = L-glutaminyl-tRNA(Gln) + L-glutamate + ADP + phosphate + H(+). Allows the formation of correctly charged Gln-tRNA(Gln) through the transamidation of misacylated Glu-tRNA(Gln) in organisms which lack glutaminyl-tRNA synthetase. The reaction takes place in the presence of glutamine and ATP through an activated gamma-phospho-Glu-tRNA(Gln). This chain is Glutamyl-tRNA(Gln) amidotransferase subunit A, found in Chlorobium chlorochromatii (strain CaD3).